The sequence spans 412 residues: Pyruvate dehydrogenase E1 component subunit alpha, mitochondrial (412 aa).

Pyruvate-binding residues include H104, Y130, R131, A169, G177, V179, D208, G209, A210, N237, and Y239. Thiamine diphosphate contacts are provided by Y130 and R131. Thiamine diphosphate is bound by residues G177, V179, D208, G209, A210, and N237. D208 provides a ligand contact to Mg(2+). Residues N237 and Y239 each coordinate Mg(2+). H304 is a thiamine diphosphate binding site.

As to quaternary structure, tetramer of 2 alpha and 2 beta subunits. Thiamine diphosphate serves as cofactor. It depends on Mg(2+) as a cofactor.

It is found in the mitochondrion matrix. The enzyme catalyses N(6)-[(R)-lipoyl]-L-lysyl-[protein] + pyruvate + H(+) = N(6)-[(R)-S(8)-acetyldihydrolipoyl]-L-lysyl-[protein] + CO2. With respect to regulation, E1 activity is regulated by phosphorylation (inactivation) and dephosphorylation (activation) of the alpha subunit. Its function is as follows. The pyruvate dehydrogenase complex catalyzes the overall conversion of pyruvate to acetyl-CoA and CO(2). It contains multiple copies of three enzymatic components: pyruvate dehydrogenase (E1), dihydrolipoamide acetyltransferase (E2) and lipoamide dehydrogenase (E3). This is Pyruvate dehydrogenase E1 component subunit alpha, mitochondrial (PDA1) from Kluyveromyces lactis (strain ATCC 8585 / CBS 2359 / DSM 70799 / NBRC 1267 / NRRL Y-1140 / WM37) (Yeast).